Here is a 989-residue protein sequence, read N- to C-terminus: Cellulose synthase A catalytic subunit 4 [UDP-forming] (989 aa).

Over 1–184 (MMESGVPPCA…SRIIPISKNK (184 aa)) the chain is Cytoplasmic. 8 residues coordinate Zn(2+): cysteine 9, cysteine 12, cysteine 20, cysteine 23, cysteine 28, cysteine 31, cysteine 43, and cysteine 46. The RING-type; degenerate zinc finger occupies 9–47 (CAACGDDAHAACRACSYALCKACLDEDAAEGRTTCARCG). Over residues 138-149 (KKEKKASAKKAA) the composition is skewed to basic residues. Residues 138–158 (KKEKKASAKKAAAKAQAPPVE) form a disordered region. A helical transmembrane segment spans residues 185–205 (LTPYRAVIIMRLVVLGLFFHY). Over 206 to 213 (RITNPVYS) the chain is Extracellular. Residues 214-234 (AFGLWMTSVICEIWFGFSWIL) form a helical membrane-spanning segment. Topologically, residues 235-772 (DQFPKWCPIN…INTIVYPFTS (538 aa)) are cytoplasmic. UDP-alpha-D-glucose contacts are provided by serine 272, lysine 278, glutamate 279, and aspartate 308. The active site involves aspartate 308. Residues 362–389 (VKERRAMKRDYEEYKVRINALVAKAQKT) are a coiled coil. Lysine 449 is a binding site for UDP-alpha-D-glucose. Residues lysine 450 and aspartate 474 each contribute to the Mn(2+) site. Residue aspartate 688 is part of the active site. A helical transmembrane segment spans residues 773-793 (LPLIAYCCLPAICLLTGKFII). Residues 794–798 (PTLSN) lie on the Extracellular side of the membrane. Residues 799-819 (AATIWFLGLFISIIVTSVLEL) traverse the membrane as a helical segment. Topologically, residues 820 to 835 (RWSGIGIEDWWRNEQF) are cytoplasmic. The chain crosses the membrane as a helical span at residues 836-856 (WVIGGVSAHLFAVFQGILKMI). Residues 857 to 884 (AGLDTNFTVTAKATDDTEFGELYVFKWT) lie on the Extracellular side of the membrane. An N-linked (GlcNAc...) asparagine glycan is attached at asparagine 862. A helical transmembrane segment spans residues 885–905 (TVLIPPTSILVLNLVGVVAGF). Residues 906-916 (SDALNSGYESW) lie on the Cytoplasmic side of the membrane. A helical transmembrane segment spans residues 917-937 (GPLFGKVFFAMWVIMHLYPFL). Over 938–946 (KGLMGRQNR) the chain is Extracellular. The chain crosses the membrane as a helical span at residues 947–967 (TPTIVVLWSVLLASVFSLLWV). At 968–989 (KIDPFIGSSETTTTNSCANFDC) the chain is on the cytoplasmic side.

The protein belongs to the glycosyltransferase 2 family. Plant cellulose synthase subfamily. Requires Mn(2+) as cofactor. It depends on Zn(2+) as a cofactor.

The protein resides in the cell membrane. It carries out the reaction [(1-&gt;4)-beta-D-glucosyl](n) + UDP-alpha-D-glucose = [(1-&gt;4)-beta-D-glucosyl](n+1) + UDP + H(+). The protein operates within glycan metabolism; plant cellulose biosynthesis. Catalytic subunit of cellulose synthase terminal complexes ('rosettes'), required for beta-1,4-glucan microfibril crystallization, a major mechanism of the cell wall formation. Involved in the secondary cell wall formation. The chain is Cellulose synthase A catalytic subunit 4 [UDP-forming] (CESA4) from Oryza sativa subsp. japonica (Rice).